The primary structure comprises 455 residues: ATP-dependent protease ATPase subunit HslU (455 aa).

Residues valine 23, 65–70 (GVGKTE), aspartate 266, glutamate 333, and arginine 405 each bind ATP.

The protein belongs to the ClpX chaperone family. HslU subfamily. In terms of assembly, a double ring-shaped homohexamer of HslV is capped on each side by a ring-shaped HslU homohexamer. The assembly of the HslU/HslV complex is dependent on binding of ATP.

It localises to the cytoplasm. In terms of biological role, ATPase subunit of a proteasome-like degradation complex; this subunit has chaperone activity. The binding of ATP and its subsequent hydrolysis by HslU are essential for unfolding of protein substrates subsequently hydrolyzed by HslV. HslU recognizes the N-terminal part of its protein substrates and unfolds these before they are guided to HslV for hydrolysis. This Xanthomonas axonopodis pv. citri (strain 306) protein is ATP-dependent protease ATPase subunit HslU.